A 173-amino-acid polypeptide reads, in one-letter code: 3-hydroxydecanoyl-[acyl-carrier-protein] dehydratase (173 aa).

His71 is an active-site residue.

The protein belongs to the thioester dehydratase family. FabA subfamily. In terms of assembly, homodimer.

It is found in the cytoplasm. It carries out the reaction a (3R)-hydroxyacyl-[ACP] = a (2E)-enoyl-[ACP] + H2O. The enzyme catalyses (3R)-hydroxydecanoyl-[ACP] = (2E)-decenoyl-[ACP] + H2O. The catalysed reaction is (2E)-decenoyl-[ACP] = (3Z)-decenoyl-[ACP]. Its pathway is lipid metabolism; fatty acid biosynthesis. Necessary for the introduction of cis unsaturation into fatty acids. Catalyzes the dehydration of (3R)-3-hydroxydecanoyl-ACP to E-(2)-decenoyl-ACP and then its isomerization to Z-(3)-decenoyl-ACP. Can catalyze the dehydratase reaction for beta-hydroxyacyl-ACPs with saturated chain lengths up to 16:0, being most active on intermediate chain length. This is 3-hydroxydecanoyl-[acyl-carrier-protein] dehydratase from Bradyrhizobium sp. (strain ORS 278).